Consider the following 226-residue polypeptide: EEF1A lysine methyltransferase 3 (226 aa).

S-adenosyl-L-methionine contacts are provided by residues W57, 83-85 (GAG), D104, W133, and A150.

This sequence belongs to the methyltransferase superfamily. METTL21 family. As to quaternary structure, interacts with members of the heat shock protein 70 and 90 families and of the TCP-1 chaperonin family, as well as with HSPD1, STIP1 and tubulin; at least some of these proteins may be methylation substrates.

It is found in the cytoplasm. The protein resides in the cytoskeleton. Its subcellular location is the microtubule organizing center. The protein localises to the centrosome. It catalyses the reaction L-lysyl-[protein] + 3 S-adenosyl-L-methionine = N(6),N(6),N(6)-trimethyl-L-lysyl-[protein] + 3 S-adenosyl-L-homocysteine + 3 H(+). The catalysed reaction is L-lysyl-[protein] + S-adenosyl-L-methionine = N(6)-methyl-L-lysyl-[protein] + S-adenosyl-L-homocysteine + H(+). The enzyme catalyses N(6)-methyl-L-lysyl-[protein] + S-adenosyl-L-methionine = N(6),N(6)-dimethyl-L-lysyl-[protein] + S-adenosyl-L-homocysteine + H(+). It carries out the reaction N(6),N(6)-dimethyl-L-lysyl-[protein] + S-adenosyl-L-methionine = N(6),N(6),N(6)-trimethyl-L-lysyl-[protein] + S-adenosyl-L-homocysteine + H(+). Its function is as follows. Protein-lysine methyltransferase that selectively mono-, di- and trimethylates 'Lys-165' of the translation elongation factors EEF1A1 and EEF1A2 in an aminoacyl-tRNA and GTP-dependent manner. EEF1A1 methylation by EEF1AKMT3 is dynamic as well as inducible by stress conditions, such as ER-stress, and plays a regulatory role on mRNA translation. The chain is EEF1A lysine methyltransferase 3 from Bos taurus (Bovine).